Reading from the N-terminus, the 444-residue chain is Ribosomal protein uS12 methylthiotransferase RimO (444 aa).

The 117-residue stretch at 1–117 (MKVGIISLGC…ITEVISSALK (117 aa)) folds into the MTTase N-terminal domain. [4Fe-4S] cluster-binding residues include C10, C46, C80, C154, C158, and C161. The Radical SAM core domain maps to 140–370 (YQPGPSAYIK…WEVQKEITRK (231 aa)). Residues 373 to 441 (EGLVGTEMRV…DYDLIGEMTN (69 aa)) form the TRAM domain.

This sequence belongs to the methylthiotransferase family. RimO subfamily. Requires [4Fe-4S] cluster as cofactor.

The protein resides in the cytoplasm. The catalysed reaction is L-aspartate(89)-[ribosomal protein uS12]-hydrogen + (sulfur carrier)-SH + AH2 + 2 S-adenosyl-L-methionine = 3-methylsulfanyl-L-aspartate(89)-[ribosomal protein uS12]-hydrogen + (sulfur carrier)-H + 5'-deoxyadenosine + L-methionine + A + S-adenosyl-L-homocysteine + 2 H(+). In terms of biological role, catalyzes the methylthiolation of an aspartic acid residue of ribosomal protein uS12. The sequence is that of Ribosomal protein uS12 methylthiotransferase RimO from Natranaerobius thermophilus (strain ATCC BAA-1301 / DSM 18059 / JW/NM-WN-LF).